Reading from the N-terminus, the 127-residue chain is Chorismate mutase AroH (127 aa).

One can recognise a Chorismate mutase aroH-type domain in the interval I3–L121. Prephenate-binding positions include R7, T74–E78, R90, and Y108.

In terms of assembly, homotrimer.

The protein localises to the cytoplasm. It catalyses the reaction chorismate = prephenate. It participates in metabolic intermediate biosynthesis; prephenate biosynthesis; prephenate from chorismate: step 1/1. Its function is as follows. Catalyzes the Claisen rearrangement of chorismate to prephenate. Probably involved in the aromatic amino acid biosynthesis. The sequence is that of Chorismate mutase AroH from Bacillus subtilis (strain 168).